We begin with the raw amino-acid sequence, 323 residues long: tRNA dimethylallyltransferase (323 aa).

G12–T19 lines the ATP pocket. Residue T14–T19 participates in substrate binding. 2 interaction with substrate tRNA regions span residues D37–L40 and Q161–R165.

It belongs to the IPP transferase family. Monomer. It depends on Mg(2+) as a cofactor.

It carries out the reaction adenosine(37) in tRNA + dimethylallyl diphosphate = N(6)-dimethylallyladenosine(37) in tRNA + diphosphate. In terms of biological role, catalyzes the transfer of a dimethylallyl group onto the adenine at position 37 in tRNAs that read codons beginning with uridine, leading to the formation of N6-(dimethylallyl)adenosine (i(6)A). The polypeptide is tRNA dimethylallyltransferase (Pseudomonas fluorescens (strain ATCC BAA-477 / NRRL B-23932 / Pf-5)).